Here is a 1720-residue protein sequence, read N- to C-terminus: TOG array regulator of axonemal microtubules protein 1 (1720 aa).

TOG stretches follow at residues 94–312 (EEDT…RRLE) and 352–596 (PQEL…MPSS). HEAT repeat units lie at residues 175-212 (AFSL…RSPG), 214-247 (VLRT…TEDL), 251-289 (LDLT…RLGQ), 345-384 (NLKF…KFNP), 390-427 (SSLV…RLGE), 431-466 (QFLG…MKEV), 467-504 (GPQQ…YPSE), and 506-543 (FDLP…SMGS). Composition is skewed to polar residues over residues 794 to 809 (FGSQ…QNPS), 819 to 829 (PVSSPRTSPKH), 842 to 852 (DNSVNFSNSWP), and 868 to 877 (LVSQKSSDPT). Disordered stretches follow at residues 794 to 924 (FGSQ…SLLP), 970 to 998 (HSSL…ESPD), and 1067 to 1087 (KKIS…NPQQ). A compositionally biased stretch (polar residues) spans 1073-1087 (AEQSPSAGSSSNPQQ). Positions 1256–1425 (EIALTEALRL…YIKDSVRNLQ (170 aa)) are TOG 3. HEAT repeat units follow at residues 1294-1331 (TKLH…YLKK) and 1335-1372 (QELD…NVTP). The interval 1430 to 1462 (GEIPLDTPSAKGRRSHTGSVGNTRSSSVSRDAF) is disordered. Over residues 1446-1458 (TGSVGNTRSSSVS) the composition is skewed to polar residues. A TOG 4 region spans residues 1484 to 1720 (SLESAEYLKL…LLDMTILNEL (237 aa)). HEAT repeat units follow at residues 1485–1522 (LESA…NNQD), 1526–1563 (GNIV…LLRD), and 1567–1605 (PIIN…HVDN).

This sequence belongs to the Crescerin family. In terms of assembly, interacts with ARMC9, CCDC66, CEP104 and CSPP1.

It is found in the cell projection. It localises to the cilium. The protein resides in the cytoplasm. Its subcellular location is the cytoskeleton. The protein localises to the cilium axoneme. Its function is as follows. Involved in ciliogenesis. It is required for appropriate acetylation and polyglutamylation of ciliary microtubules, and regulation of cilium length. Interacts with microtubules and promotes microtubule polymerization via its HEAT repeat domains, especially those in TOG region 2 and 4. This Homo sapiens (Human) protein is TOG array regulator of axonemal microtubules protein 1.